A 639-amino-acid chain; its full sequence is Developmental regulatory protein wetA (639 aa).

Disordered regions lie at residues 65 to 97 (MDPSHHHHHPHHHAHGESSTTSSGVSNADEFDF), 206 to 369 (TTMR…SAAS), 418 to 552 (GLLI…SADE), and 587 to 613 (LMTGVAPSGSSKTKARREKEAQERRRR). The span at 69–78 (HHHHHPHHHA) shows a compositional bias: basic residues. 2 stretches are compositionally biased toward polar residues: residues 81–90 (ESSTTSSGVS) and 214–226 (VSQTLQRAVSPSM). Over residues 246–255 (RGRRAHRAHT) the composition is skewed to basic residues. 3 stretches are compositionally biased toward low complexity: residues 256-275 (QHALQHQQQQHQHQQQQAHQ), 346-369 (QQQWQQQQQQQHNGAQQHQWSAAS), and 506-526 (HSSGGSAASSSQRSASGRVSV).

This sequence belongs to the wetA family.

In terms of biological role, brlA, abaA and wetA are pivotal regulators of conidiophore development and conidium maturation. They act individually and together to regulate their own expression and that of numerous other sporulation-specific genes. Acts as a crucial regulator of both conidiation capacity and conidial quality. Plays a role in virulence. The sequence is that of Developmental regulatory protein wetA from Beauveria bassiana (strain ARSEF 2860) (White muscardine disease fungus).